A 314-amino-acid polypeptide reads, in one-letter code: Solute carrier family 25 member 33 (314 aa).

Solcar repeat units lie at residues 4–111, 119–206, and 224–308; these read KDTL…SKET, NSGV…LKKY, and SDFL…IVHL. A run of 6 helical transmembrane segments spans residues 7–27, 44–58, 114–134, 183–203, 226–246, and 291–311; these read LLHLFAGGCGGTVGAIMTCPL, VFQVQLGTLNGAGVI, GIFVPNSGVVHMSSAGFAAFI, LTASYAGISETMICFLIYETL, FLGLMFAAAFAKGCASCIAYP, and QIPNTAIVLSTYELIVHLLAE.

This sequence belongs to the mitochondrial carrier (TC 2.A.29) family.

The protein resides in the mitochondrion inner membrane. Functionally, mitochondrial transporter that imports/exports pyrimidine nucleotides into and from mitochondria which participates in dendritic cell endocytosis. The chain is Solute carrier family 25 member 33 (slc25a33) from Danio rerio (Zebrafish).